The chain runs to 273 residues: 4-hydroxy-tetrahydrodipicolinate reductase (273 aa).

NAD(+)-binding positions include 12 to 17 and Glu38; that span reads GAGGRM. Arg39 lines the NADP(+) pocket. Residues 102–104 and 126–129 contribute to the NAD(+) site; these read GTT and AANF. His159 serves as the catalytic Proton donor/acceptor. His160 contacts (S)-2,3,4,5-tetrahydrodipicolinate. Lys163 serves as the catalytic Proton donor. 169–170 provides a ligand contact to (S)-2,3,4,5-tetrahydrodipicolinate; it reads GT.

The protein belongs to the DapB family. Homotetramer.

Its subcellular location is the cytoplasm. The enzyme catalyses (S)-2,3,4,5-tetrahydrodipicolinate + NAD(+) + H2O = (2S,4S)-4-hydroxy-2,3,4,5-tetrahydrodipicolinate + NADH + H(+). It carries out the reaction (S)-2,3,4,5-tetrahydrodipicolinate + NADP(+) + H2O = (2S,4S)-4-hydroxy-2,3,4,5-tetrahydrodipicolinate + NADPH + H(+). The protein operates within amino-acid biosynthesis; L-lysine biosynthesis via DAP pathway; (S)-tetrahydrodipicolinate from L-aspartate: step 4/4. Its function is as follows. Catalyzes the conversion of 4-hydroxy-tetrahydrodipicolinate (HTPA) to tetrahydrodipicolinate. This is 4-hydroxy-tetrahydrodipicolinate reductase from Salmonella typhimurium (strain LT2 / SGSC1412 / ATCC 700720).